A 2003-amino-acid polypeptide reads, in one-letter code: Neurogenic locus notch homolog protein 4 (2003 aa).

The signal sequence occupies residues 1–23 (MQPPSLLLLLLLLLLLCVSVVRP). 4 consecutive EGF-like domains span residues 24-63 (RGLLCGSFPEPCANGGTCLSLSLGQGTCQCAPGFLGETCQ), 64-115 (FPDP…ERCQ), 118-155 (LEDPCPPSFCSKRGRCHIQASGRPQCSCMPGWTGEQCQ), and 156-192 (LRDFCSANPCVNGGVCLATYPQIQCHCPPGFEGHACE). At 24 to 1447 (RGLLCGSFPE…TAPPANQLPW (1424 aa)) the chain is on the extracellular side. 48 disulfide bridges follow: Cys28–Cys41, Cys35–Cys51, Cys53–Cys62, Cys68–Cys80, Cys74–Cys103, Cys105–Cys114, Cys122–Cys133, Cys127–Cys143, Cys145–Cys154, Cys160–Cys171, Cys165–Cys180, Cys182–Cys191, Cys198–Cys211, Cys205–Cys220, Cys222–Cys231, Cys238–Cys249, Cys243–Cys262, Cys264–Cys273, Cys280–Cys291, Cys285–Cys300, Cys302–Cys311, Cys318–Cys332, Cys326–Cys341, Cys343–Cys352, Cys359–Cys370, Cys364–Cys379, Cys381–Cys390, Cys396–Cys407, Cys401–Cys418, Cys420–Cys429, Cys436–Cys452, Cys446–Cys461, Cys463–Cys472, Cys479–Cys490, Cys484–Cys499, Cys501–Cys510, Cys517–Cys528, Cys522–Cys537, Cys539–Cys548, Cys555–Cys566, Cys560–Cys575, Cys577–Cys586, Cys593–Cys604, Cys598–Cys613, Cys615–Cys624, Cys629–Cys640, Cys634–Cys649, and Cys651–Cys658. Residues 194-232 (DVNECFQDPGPCPKGTSCHNTLGSFQCLCPVGQEGPRCE) enclose the EGF-like 5; calcium-binding domain. The 41-residue stretch at 234–274 (RAGPCPPRGCSNGGTCQLMPEKDSTFHLCLCPPGFIGPDCE) folds into the EGF-like 6 domain. Residues 276–312 (NPDNCVSHQCQNGGTCQDGLDTYTCLCPETWTGWDCS) enclose the EGF-like 7; calcium-binding domain. One can recognise an EGF-like 8; calcium-binding domain in the interval 314–353 (DVDECETQGPPHCRNGGTCQNSAGSFHCVCVSGWGGTSCE). The EGF-like 9; calcium-binding domain maps to 355–391 (NLDDCIAATCAPGSTCIDRVGSFSCLCPPGRTGLLCH). The 39-residue stretch at 392-430 (LEDMCLSQPCHGDAQCSTNPLTGSTLCLCQPGYSGPTCH) folds into the EGF-like 10 domain. In terms of domain architecture, EGF-like 11; calcium-binding spans 432 to 473 (DLDECLMAQQGPSPCEHGGSCLNTPGSFNCLCPPGYTGSRCE). Positions 475 to 511 (DHNECLSQPCHPGSTCLDLLATFHCLCPPGLEGQLCE) constitute an EGF-like 12; calcium-binding domain. The 37-residue stretch at 513–549 (ETNECASAPCLNHADCHDLLNGFQCICLPGFSGTRCE) folds into the EGF-like 13; calcium-binding domain. Positions 551–587 (DIDECRSSPCANGGQCQDQPGAFHCKCLPGFEGPRCQ) constitute an EGF-like 14; calcium-binding domain. The 37-residue stretch at 589 to 625 (EVDECLSDPCPVGASCLDLPGAFFCLCPSGFTGQLCE) folds into the EGF-like 15; calcium-binding domain. EGF-like domains lie at 626-659 (VPLCAPNLCQPKQICKDQKDKANCLCPDGSPGCA), 661-689 (PEDNCTCHHGHCQRSSCVCDVGWTGPECE), 691-727 (ELGGCISAPCAHGGTCYPQPSGYNCTCPTGYTGPTCS), 729-765 (EMTACHSGPCLNGGSCNPSPGGYYCTCPPSHTGPQCQ), 767-803 (STDYCVSAPCFNGGTCVNRPGTFSCLCAMGFQGPRCE), 806-842 (LRPSCADSPCRNRATCQDSPQGPRCLCPTGYTGGSCQ), 844-880 (LMDLCAQKPCPRNSHCLQTGPSFHCLCLQGWTGPLCN), 882-928 (PLSS…SLCQ), 930-966 (HVNPCESRPCQNGATCMAQPSGYLCQCAPGYDGQNCS), 968-1004 (ELDACQSQPCHNHGTCTPKPGGFHCACPPGFVGLRCE), 1006-1044 (DVDECLDQPCHPTGTAACHSLANAFYCQCLPGHTGQWCE), 1046-1085 (EIDPCHSQPCFHGGTCEATAGSPLGFICHCPKGFEGPTCS), 1087-1126 (RAPSCGFHHCHHGGLCLPSPKPGFPPRCACLSGYGGPDCL), and 1130-1171 (APKG…PRCQ). Asn664 carries an N-linked (GlcNAc...) asparagine glycan. 47 disulfides stabilise this stretch: Cys665-Cys672, Cys667-Cys677, Cys679-Cys688, Cys695-Cys706, Cys700-Cys715, Cys717-Cys726, Cys733-Cys744, Cys738-Cys753, Cys755-Cys764, Cys771-Cys782, Cys776-Cys791, Cys793-Cys802, Cys810-Cys821, Cys815-Cys830, Cys832-Cys841, Cys848-Cys859, Cys853-Cys868, Cys870-Cys879, Cys886-Cys907, Cys901-Cys916, Cys918-Cys927, Cys934-Cys945, Cys939-Cys954, Cys956-Cys965, Cys972-Cys983, Cys977-Cys992, Cys994-Cys1003, Cys1010-Cys1023, Cys1015-Cys1032, Cys1034-Cys1043, Cys1050-Cys1061, Cys1055-Cys1073, Cys1075-Cys1084, Cys1091-Cys1102, Cys1096-Cys1114, Cys1116-Cys1125, Cys1134-Cys1146, Cys1140-Cys1159, Cys1161-Cys1170, Cys1178-Cys1191, Cys1187-Cys1203, Cys1214-Cys1238, Cys1220-Cys1233, Cys1229-Cys1245, Cys1251-Cys1277, Cys1259-Cys1272, and Cys1268-Cys1284. N-linked (GlcNAc...) asparagine glycosylation occurs at Asn714. Residue Asn964 is glycosylated (N-linked (GlcNAc...) asparagine). The N-linked (GlcNAc...) asparagine glycan is linked to Asn1143. LNR repeat units follow at residues 1170–1213 (CQKP…PWKG), 1214–1250 (CPSHSRCWLLFRDGQCHPQCDSEECLFDGYDCETPPA), and 1251–1294 (CTPA…PEWG). Positions 1347-1371 (AEEKLGGTRDPTYQERAAPQTQPLG) are disordered. The chain crosses the membrane as a helical span at residues 1448 to 1468 (PVLCSPVAGVILLALGALLVL). At 1469-2003 (QLIRRRRREH…PINQGGEGKK (535 aa)) the chain is on the cytoplasmic side. The disordered stretch occupies residues 1485–1508 (PGFTRRPRTQSAPHRRRPPLGEDS). Residues 1489–1502 (RRPRTQSAPHRRRP) show a composition bias toward basic residues. ANK repeat units follow at residues 1633–1665 (TGETPLHLAARFSRPTAARRLLEAGANPNQPDR), 1666–1698 (AGRTPLHAAVAADAREVCQLLLRSRQTAVDART), 1700–1732 (DGTTPLMLAARLAVEDLVEELIAAQADVGARDK), 1733–1765 (WGKTALHWAAAVNNARAARSLLQAGADKDAQDN), and 1766–1798 (REQTPLFLAAREGAVEVAQLLLGLGAARELRDQ). Disordered stretches follow at residues 1900–1927 (LSGVGAGGGPTPRGRRFSAGMRGPRPNP) and 1968–2003 (PPPCLTPSPERGSPQLDCGPPALQEMPINQGGEGKK).

This sequence belongs to the NOTCH family. As to quaternary structure, heterodimer of a C-terminal fragment N(TM) and a N-terminal fragment N(EC) which are probably linked by disulfide bonds. Interacts with MAML1, MAML2 and MAML3 which act as transcriptional coactivators for NOTCH4. In terms of assembly, (Microbial infection) Interacts with Epstein-Barr virus (EBV) RK-BARF0. Synthesized in the endoplasmic reticulum as an inactive form which is proteolytically cleaved by a furin-like convertase in the trans-Golgi network before it reaches the plasma membrane to yield an active, ligand-accessible form. Cleavage results in a C-terminal fragment N(TM) and a N-terminal fragment N(EC). Following ligand binding, it is cleaved by TNF-alpha converting enzyme (TACE) to yield a membrane-associated intermediate fragment called notch extracellular truncation (NEXT). This fragment is then cleaved by presenilin dependent gamma-secretase to release a notch-derived peptide containing the intracellular domain (NICD) from the membrane. Post-translationally, phosphorylated. In terms of tissue distribution, highly expressed in the heart, moderately in the lung and placenta and at low levels in the liver, skeletal muscle, kidney, pancreas, spleen, lymph node, thymus, bone marrow and fetal liver. No expression was seen in adult brain or peripheral blood leukocytes.

It localises to the cell membrane. The protein localises to the nucleus. Its function is as follows. Functions as a receptor for membrane-bound ligands Jagged1, Jagged2 and Delta1 to regulate cell-fate determination. Upon ligand activation through the released notch intracellular domain (NICD) it forms a transcriptional activator complex with RBPJ/RBPSUH and activates genes of the enhancer of split locus. Affects the implementation of differentiation, proliferation and apoptotic programs. May regulate branching morphogenesis in the developing vascular system. The sequence is that of Neurogenic locus notch homolog protein 4 from Homo sapiens (Human).